We begin with the raw amino-acid sequence, 321 residues long: uncharacterized protein (321 aa).

28-35 (GPINSGKT) lines the ATP pocket.

It belongs to the archaeal ATPase family.

This is an uncharacterized protein from Pyrococcus horikoshii (strain ATCC 700860 / DSM 12428 / JCM 9974 / NBRC 100139 / OT-3).